Here is a 159-residue protein sequence, read N- to C-terminus: Allergen Arg r 1 (159 aa).

An N-terminal signal peptide occupies residues 1-16 (MALIILLVACLSVVSA). Cystine bridges form between cysteine 50–cysteine 155 and cysteine 109–cysteine 134.

The protein belongs to the calycin superfamily. Histamine-binding salivary protein family. Not glycosylated.

The protein resides in the secreted. This Argas reflexus (European pigeon tick) protein is Allergen Arg r 1.